Consider the following 280-residue polypeptide: Lysosome-associated membrane glycoprotein 5 (280 aa).

The first 29 residues, 1-29 (MDLRRRALLGVDGLRVLLMLFHTVTRIMA), serve as a signal peptide directing secretion. Residues 30–235 (EQEVENLSGL…PVDEREQLEE (206 aa)) are Extracellular-facing. Asn35 and Asn53 each carry an N-linked (GlcNAc...) asparagine glycan. Residues 236 to 256 (TLPLILGLILGLVIVVTLVIY) form a helical membrane-spanning segment. Topologically, residues 257–280 (HIHHKMTANQVQIPRDRSQYKHMG) are cytoplasmic.

This sequence belongs to the LAMP family. In terms of processing, glycosylated.

The protein resides in the cytoplasmic vesicle membrane. Its subcellular location is the cell membrane. It is found in the cell projection. The protein localises to the dendrite. It localises to the cytoplasmic vesicle. The protein resides in the secretory vesicle. Its subcellular location is the synaptic vesicle membrane. It is found in the growth cone membrane. The protein localises to the early endosome membrane. It localises to the recycling endosome. The protein resides in the endoplasmic reticulum-Golgi intermediate compartment membrane. Its subcellular location is the endosome membrane. In terms of biological role, plays a role in short-term synaptic plasticity in a subset of GABAergic neurons in the brain. The sequence is that of Lysosome-associated membrane glycoprotein 5 (LAMP5) from Bos taurus (Bovine).